Consider the following 182-residue polypeptide: Biotin carboxyl carrier protein of acetyl-CoA carboxylase (182 aa).

The tract at residues 70–95 (AAPSPSPEPGTSRAADHAVTSSGSQP) is disordered. A Biotinyl-binding domain is found at 104–180 (LAEVASPMVG…EYNQPLMRIK (77 aa)). K146 is subject to N6-biotinyllysine.

Homodimer.

It participates in lipid metabolism; fatty acid biosynthesis. This protein is a component of the acetyl coenzyme A carboxylase complex; first, biotin carboxylase catalyzes the carboxylation of the carrier protein and then the transcarboxylase transfers the carboxyl group to form malonyl-CoA. This chain is Biotin carboxyl carrier protein of acetyl-CoA carboxylase (accB), found in Nostoc sp. (strain PCC 7120 / SAG 25.82 / UTEX 2576).